The chain runs to 258 residues: Acetylglutamate kinase (258 aa).

Residues 44-45 (GG), Arg66, and Asn158 contribute to the substrate site. Residues 181-186 (DVSGIL) and 209-211 (IIT) each bind ATP.

It belongs to the acetylglutamate kinase family. ArgB subfamily. In terms of assembly, homodimer.

The protein localises to the cytoplasm. The enzyme catalyses N-acetyl-L-glutamate + ATP = N-acetyl-L-glutamyl 5-phosphate + ADP. It participates in amino-acid biosynthesis; L-arginine biosynthesis; N(2)-acetyl-L-ornithine from L-glutamate: step 2/4. Catalyzes the ATP-dependent phosphorylation of N-acetyl-L-glutamate. In Shigella dysenteriae serotype 1 (strain Sd197), this protein is Acetylglutamate kinase.